Here is a 1006-residue protein sequence, read N- to C-terminus: Multiple C2 domain and transmembrane region protein 9 (1006 aa).

One can recognise a C2 1 domain in the interval 1 to 108; the sequence is MSNIKLGVEV…PRSEAAPFNY (108 aa). Positions 135 to 156 are disordered; that stretch reads VTPSVPTPVPESPQAYSPSPRK. C2 domains are found at residues 251-371, 411-536, and 579-704; these read RGTE…PQWY, SDSS…DRWV, and NSSD…THAY. Residues Asp284, Asp290, Asp337, Asp339, and Asp344 each contribute to the Ca(2+) site. 2 helical membrane passes run 842–862 and 946–966; these read MLVT…AVIG and ATAI…ITPF.

Belongs to the MCTP family. Ca(2+) is required as a cofactor. As to expression, expressed in incipient leaf primordia and roots meristems. Observed in flowers.

It localises to the cell membrane. The protein resides in the cytoplasm. Its function is as follows. May function as a signaling molecule by regulating the trafficking of other regulators. The chain is Multiple C2 domain and transmembrane region protein 9 from Arabidopsis thaliana (Mouse-ear cress).